Reading from the N-terminus, the 563-residue chain is Nicalin (563 aa).

The first 29 residues, 1–29 (MQDEIIDFFRSPALLFYMTLMLTICVVNG), serve as a signal peptide directing secretion. Over 30 to 522 (SQQVGEVVET…NRLVAERVKP (493 aa)) the chain is Lumenal. A glycan (N-linked (GlcNAc...) asparagine) is linked at N232. Residues 523–543 (AVFELVIAAGVFTYLSAFYYI) form a helical membrane-spanning segment. Over 544–563 (ATHSQNTIEGTVAAIRKSIF) the chain is Cytoplasmic.

It belongs to the nicastrin family. May interact with the levamisole-sensitive nicotinic acetylcholine receptor (L-AChR). May interact with nra-4 in the ER. As to expression, expressed in body wall, pharyngeal, and vulval muscles, excretory canal cell, head and motor neurons, and vulval epithelium.

The protein localises to the endoplasmic reticulum membrane. Functionally, involved in the recognition and selection of protein complexes to exit the endoplasmic reticulum (ER). In muscles, regulates levamisole-sensitive nicotinic acetylcholine receptor (L-AChR) subunit composition, possibly by allowing only specific L-AChR subunit combinations to exit the ER. Specifically, may promote the inclusion of alpha subunits unc-38 and unc-29 into L-AChR. Regulates L-AChR sensitivity to agonists such as nicotine and levamisole at neuro-muscular junctions. In touch neurons, may prevent ER exit of incorrectly folded mec-4-mec-10 ion channel. The chain is Nicalin from Caenorhabditis elegans.